The chain runs to 105 residues: Phosphoribosyl-ATP pyrophosphatase (105 aa).

It belongs to the PRA-PH family.

It localises to the cytoplasm. The catalysed reaction is 1-(5-phospho-beta-D-ribosyl)-ATP + H2O = 1-(5-phospho-beta-D-ribosyl)-5'-AMP + diphosphate + H(+). Its pathway is amino-acid biosynthesis; L-histidine biosynthesis; L-histidine from 5-phospho-alpha-D-ribose 1-diphosphate: step 2/9. The chain is Phosphoribosyl-ATP pyrophosphatase from Ruegeria sp. (strain TM1040) (Silicibacter sp.).